We begin with the raw amino-acid sequence, 356 residues long: Protein ATP1B4 (356 aa).

The Nuclear segment spans residues 1-109 (MRRQLRSRRA…SLARTGQSRS (109 aa)). The segment at 32 to 77 (LADEEEEAEEEAQVMMVPGLEEEEEEEEGKEEEEEREEEEGQGQST) is disordered. 2 stretches are compositionally biased toward acidic residues: residues 33–43 (ADEEEEAEEEA) and 51–72 (LEEE…EEEG). The chain crosses the membrane as a helical; Signal-anchor for type II membrane protein span at residues 110–130 (LILVIYFFFYASLAAVITLFI). The Perinuclear space segment spans residues 131–356 (YMLFLAISPY…RIIFTLNIET (226 aa)).

It belongs to the X(+)/potassium ATPases subunit beta family. As to quaternary structure, does not associate with known Na,K-ATPase alpha-subunits. Associates with a SMAD7-transcriptional complex. Interacts with SNW1 and TOR1AIP1. Expressed in perinatal myocytes (at protein level). Expressed during postnatal development in skeletal muscle and heart.

The protein localises to the nucleus inner membrane. Its function is as follows. May act as a transcriptional coregulator during muscle development through its interaction with SNW1. Has lost its ancestral function as a Na,K-ATPase beta-subunit. This is Protein ATP1B4 (Atp1b4) from Rattus norvegicus (Rat).